The following is a 351-amino-acid chain: DNA polymerase IV (351 aa).

The UmuC domain maps to 3–187 (ILFVDFDYFF…IDIDEVPGVG (185 aa)). Mg(2+) is bound by residues D7 and D105. E106 is a catalytic residue.

This sequence belongs to the DNA polymerase type-Y family. Mg(2+) serves as cofactor.

The catalysed reaction is DNA(n) + a 2'-deoxyribonucleoside 5'-triphosphate = DNA(n+1) + diphosphate. In terms of biological role, poorly processive, error-prone DNA polymerase involved in untargeted mutagenesis. Copies undamaged DNA at stalled replication forks, which arise in vivo from mismatched or misaligned primer ends. These misaligned primers can be extended by PolIV. Exhibits no 3'-5' exonuclease (proofreading) activity. May be involved in translesional synthesis. The sequence is that of DNA polymerase IV from Sulfurisphaera tokodaii (strain DSM 16993 / JCM 10545 / NBRC 100140 / 7) (Sulfolobus tokodaii).